A 160-amino-acid chain; its full sequence is Sulfur-rich protein (160 aa).

2 helical membrane passes run 63–83 and 92–112; these read ITMVVLGIILLIAGLALTFVL and FLFLIPAVIGLVKLLATSVCM.

The protein resides in the membrane. This is Sulfur-rich protein (srp) from Chlamydophila psittaci (strain ATCC VR-125 / 6BC) (Chlamydia psittaci).